The primary structure comprises 367 residues: Germination protease (367 aa).

A propeptide spanning residues 1–15 (MKEPLDLSKYSVRTD) is cleaved from the precursor.

Belongs to the peptidase A25 family. As to quaternary structure, homotetramer. Autoproteolytically processed. The inactive tetrameric zymogen termed p46 autoprocesses to a smaller form termed p41, which is active only during spore germination.

It carries out the reaction Endopeptidase action with P4 Glu or Asp, P1 preferably Glu &gt; Asp, P1' hydrophobic and P2' Ala.. Its function is as follows. Initiates the rapid degradation of small, acid-soluble proteins during spore germination. The protein is Germination protease of Bacillus cereus (strain AH187).